The primary structure comprises 502 residues: Glycerol kinase (502 aa).

An ADP-binding site is contributed by Thr-14. Residues Thr-14, Thr-15, and Ser-16 each contribute to the ATP site. Residue Thr-14 participates in sn-glycerol 3-phosphate binding. Arg-18 is an ADP binding site. Residues Arg-84, Glu-85, and Tyr-136 each coordinate sn-glycerol 3-phosphate. Glycerol is bound by residues Arg-84, Glu-85, and Tyr-136. A Phosphohistidine; by HPr modification is found at His-232. Asp-246 contributes to the sn-glycerol 3-phosphate binding site. Residues Asp-246 and Gln-247 each contribute to the glycerol site. Residues Thr-268 and Gly-311 each contribute to the ADP site. Residues Thr-268, Gly-311, Gln-315, and Gly-412 each coordinate ATP. The ADP site is built by Gly-412 and Asn-416.

The protein belongs to the FGGY kinase family. As to quaternary structure, homotetramer and homodimer (in equilibrium). Post-translationally, the phosphoenolpyruvate-dependent sugar phosphotransferase system (PTS), including enzyme I, and histidine-containing protein (HPr) are required for the phosphorylation, which leads to the activation of the enzyme.

The enzyme catalyses glycerol + ATP = sn-glycerol 3-phosphate + ADP + H(+). It participates in polyol metabolism; glycerol degradation via glycerol kinase pathway; sn-glycerol 3-phosphate from glycerol: step 1/1. Activated by phosphorylation and inhibited by fructose 1,6-bisphosphate (FBP). Key enzyme in the regulation of glycerol uptake and metabolism. Catalyzes the phosphorylation of glycerol to yield sn-glycerol 3-phosphate. This chain is Glycerol kinase, found in Streptococcus pneumoniae (strain Hungary19A-6).